A 190-amino-acid polypeptide reads, in one-letter code: uncharacterized protein (190 aa).

Transmembrane regions (helical) follow at residues Leu-15–Ile-35, Phe-58–Ile-78, Phe-94–Phe-114, and Phe-148–Val-168.

It localises to the membrane. This is an uncharacterized protein from Saccharomyces cerevisiae (strain ATCC 204508 / S288c) (Baker's yeast).